A 111-amino-acid chain; its full sequence is MAQIQFARGLVEDAIPTIRLTRSRTGDSGTATFYFESPNIFADEQTQEVTGMYLIDSEGEIVSREVKGKFINGKPHAIEAILIMNSPDEWERFMRFMERYAQEHGLEFTKA.

Belongs to the Psb28 family. Part of the photosystem II complex.

Its subcellular location is the cellular thylakoid membrane. The chain is Photosystem II reaction center Psb28 protein from Gloeothece citriformis (strain PCC 7424) (Cyanothece sp. (strain PCC 7424)).